Here is a 467-residue protein sequence, read N- to C-terminus: Transcriptional modulator WTM2 (467 aa).

Over residues 1–12 the composition is skewed to low complexity; that stretch reads MAKSKSSQGASG. Disordered regions lie at residues 1-22 and 84-121; these read MAKS…PSLY and TFYD…AFQD. Residues 87-100 show a composition bias toward acidic residues; sequence DDDDDDDNDDDDEE. 3 WD repeats span residues 244-282, 287-327, and 349-389; these read PGTN…KPLW, PKNG…LATT, and SGGD…SRND.

Functionally, transcriptional modulator with roles in meiotic regulation and silencing. This chain is Transcriptional modulator WTM2 (WTM2), found in Saccharomyces cerevisiae (strain ATCC 204508 / S288c) (Baker's yeast).